Consider the following 353-residue polypeptide: Phosphate acyltransferase (353 aa).

This sequence belongs to the PlsX family. As to quaternary structure, homodimer. Probably interacts with PlsY.

It is found in the cytoplasm. It catalyses the reaction a fatty acyl-[ACP] + phosphate = an acyl phosphate + holo-[ACP]. The protein operates within lipid metabolism; phospholipid metabolism. In terms of biological role, catalyzes the reversible formation of acyl-phosphate (acyl-PO(4)) from acyl-[acyl-carrier-protein] (acyl-ACP). This enzyme utilizes acyl-ACP as fatty acyl donor, but not acyl-CoA. This is Phosphate acyltransferase from Syntrophobacter fumaroxidans (strain DSM 10017 / MPOB).